We begin with the raw amino-acid sequence, 97 residues long: MKPTMLLMITVFLIFPAISQAESPFSSLQSAKEKTTVLQDLRKICTPQASLSDEAWEKLMLSDENNKQHIREAIVAMERNNQSNYWEALGKVECPDM.

This is an uncharacterized protein from Escherichia coli O6:K15:H31 (strain 536 / UPEC).